Consider the following 67-residue polypeptide: Small ribosomal subunit protein eS27 (67 aa).

C22, C25, C41, and C44 together coordinate Zn(2+). The C4-type zinc finger occupies 22 to 44; the sequence is CPDCGNEQVTFSHAAMVVRCLVC.

It belongs to the eukaryotic ribosomal protein eS27 family. As to quaternary structure, part of the 30S ribosomal subunit. The cofactor is Zn(2+).

The polypeptide is Small ribosomal subunit protein eS27 (Pyrobaculum calidifontis (strain DSM 21063 / JCM 11548 / VA1)).